Here is a 39-residue protein sequence, read N- to C-terminus: MADFTRIPLWLIGTIVGILVIGLIGIYFYGSYSGLGSSL.

The helical transmembrane segment at 7–27 (IPLWLIGTIVGILVIGLIGIY) threads the bilayer.

Belongs to the PsbJ family. As to quaternary structure, PSII is composed of 1 copy each of membrane proteins PsbA, PsbB, PsbC, PsbD, PsbE, PsbF, PsbH, PsbI, PsbJ, PsbK, PsbL, PsbM, PsbT, PsbX, PsbY, PsbZ, Psb30/Ycf12, at least 3 peripheral proteins of the oxygen-evolving complex and a large number of cofactors. It forms dimeric complexes.

It localises to the plastid. Its subcellular location is the chloroplast thylakoid membrane. One of the components of the core complex of photosystem II (PSII). PSII is a light-driven water:plastoquinone oxidoreductase that uses light energy to abstract electrons from H(2)O, generating O(2) and a proton gradient subsequently used for ATP formation. It consists of a core antenna complex that captures photons, and an electron transfer chain that converts photonic excitation into a charge separation. This is Photosystem II reaction center protein J from Welwitschia mirabilis (Tree tumbo).